The following is a 157-amino-acid chain: S-ribosylhomocysteine lyase 2 (157 aa).

Residues His54, His58, and Cys124 each coordinate Fe cation.

This sequence belongs to the LuxS family. As to quaternary structure, homodimer. Requires Fe cation as cofactor.

The catalysed reaction is S-(5-deoxy-D-ribos-5-yl)-L-homocysteine = (S)-4,5-dihydroxypentane-2,3-dione + L-homocysteine. In terms of biological role, involved in the synthesis of autoinducer 2 (AI-2) which is secreted by bacteria and is used to communicate both the cell density and the metabolic potential of the environment. The regulation of gene expression in response to changes in cell density is called quorum sensing. Catalyzes the transformation of S-ribosylhomocysteine (RHC) to homocysteine (HC) and 4,5-dihydroxy-2,3-pentadione (DPD). This Lactobacillus delbrueckii subsp. bulgaricus (strain ATCC BAA-365 / Lb-18) protein is S-ribosylhomocysteine lyase 2.